The chain runs to 684 residues: DNA ligase (684 aa).

Residues 34 to 38 (DYDFD), 83 to 84 (SL), and glutamate 117 contribute to the NAD(+) site. Lysine 119 (N6-AMP-lysine intermediate) is an active-site residue. Residues arginine 140, glutamate 188, lysine 301, and lysine 325 each coordinate NAD(+). The Zn(2+) site is built by cysteine 419, cysteine 422, cysteine 437, and cysteine 443. The region spanning 602 to 684 (DAPQTFAGMT…QTMLAAESGD (83 aa)) is the BRCT domain.

Belongs to the NAD-dependent DNA ligase family. LigA subfamily. Mg(2+) is required as a cofactor. Requires Mn(2+) as cofactor.

It carries out the reaction NAD(+) + (deoxyribonucleotide)n-3'-hydroxyl + 5'-phospho-(deoxyribonucleotide)m = (deoxyribonucleotide)n+m + AMP + beta-nicotinamide D-nucleotide.. Its function is as follows. DNA ligase that catalyzes the formation of phosphodiester linkages between 5'-phosphoryl and 3'-hydroxyl groups in double-stranded DNA using NAD as a coenzyme and as the energy source for the reaction. It is essential for DNA replication and repair of damaged DNA. This Chloroherpeton thalassium (strain ATCC 35110 / GB-78) protein is DNA ligase.